A 131-amino-acid polypeptide reads, in one-letter code: Small ribosomal subunit protein uS8 (131 aa).

It belongs to the universal ribosomal protein uS8 family. As to quaternary structure, part of the 30S ribosomal subunit. Contacts proteins S5 and S12.

Its function is as follows. One of the primary rRNA binding proteins, it binds directly to 16S rRNA central domain where it helps coordinate assembly of the platform of the 30S subunit. In Dictyoglomus turgidum (strain DSM 6724 / Z-1310), this protein is Small ribosomal subunit protein uS8.